The sequence spans 130 residues: MAKVQYWGTGRRKEAVARVRLVPGEGNIIINNRSFEDFFPNQTSRLIVQQPLVLTAMQGRFDIICRVNGGGVSGQAGAIQLGIARALLKANPDIKAMLRRSGFLTRDPRMKERKKYGLHKARKAPQYSKR.

The tract at residues 105 to 130 (TRDPRMKERKKYGLHKARKAPQYSKR) is disordered. A compositionally biased stretch (basic residues) spans 111-130 (KERKKYGLHKARKAPQYSKR).

This sequence belongs to the universal ribosomal protein uS9 family.

In Syntrophomonas wolfei subsp. wolfei (strain DSM 2245B / Goettingen), this protein is Small ribosomal subunit protein uS9.